Consider the following 221-residue polypeptide: ATP phosphoribosyltransferase (221 aa).

This sequence belongs to the ATP phosphoribosyltransferase family. Short subfamily. Heteromultimer composed of HisG and HisZ subunits.

Its subcellular location is the cytoplasm. The catalysed reaction is 1-(5-phospho-beta-D-ribosyl)-ATP + diphosphate = 5-phospho-alpha-D-ribose 1-diphosphate + ATP. Its pathway is amino-acid biosynthesis; L-histidine biosynthesis; L-histidine from 5-phospho-alpha-D-ribose 1-diphosphate: step 1/9. Its function is as follows. Catalyzes the condensation of ATP and 5-phosphoribose 1-diphosphate to form N'-(5'-phosphoribosyl)-ATP (PR-ATP). Has a crucial role in the pathway because the rate of histidine biosynthesis seems to be controlled primarily by regulation of HisG enzymatic activity. The chain is ATP phosphoribosyltransferase from Rhizorhabdus wittichii (strain DSM 6014 / CCUG 31198 / JCM 15750 / NBRC 105917 / EY 4224 / RW1) (Sphingomonas wittichii).